The chain runs to 105 residues: Pyrimidine/purine nucleoside phosphorylase (105 aa).

Belongs to the nucleoside phosphorylase PpnP family.

The enzyme catalyses a purine D-ribonucleoside + phosphate = a purine nucleobase + alpha-D-ribose 1-phosphate. It carries out the reaction adenosine + phosphate = alpha-D-ribose 1-phosphate + adenine. It catalyses the reaction cytidine + phosphate = cytosine + alpha-D-ribose 1-phosphate. The catalysed reaction is guanosine + phosphate = alpha-D-ribose 1-phosphate + guanine. The enzyme catalyses inosine + phosphate = alpha-D-ribose 1-phosphate + hypoxanthine. It carries out the reaction thymidine + phosphate = 2-deoxy-alpha-D-ribose 1-phosphate + thymine. It catalyses the reaction uridine + phosphate = alpha-D-ribose 1-phosphate + uracil. The catalysed reaction is xanthosine + phosphate = alpha-D-ribose 1-phosphate + xanthine. Catalyzes the phosphorolysis of diverse nucleosides, yielding D-ribose 1-phosphate and the respective free bases. Can use uridine, adenosine, guanosine, cytidine, thymidine, inosine and xanthosine as substrates. Also catalyzes the reverse reactions. The chain is Pyrimidine/purine nucleoside phosphorylase from Albidiferax ferrireducens (strain ATCC BAA-621 / DSM 15236 / T118) (Rhodoferax ferrireducens).